An 82-amino-acid chain; its full sequence is Sulfur carrier protein TusA (82 aa).

Catalysis depends on cysteine 19, which acts as the Cysteine persulfide intermediate.

This sequence belongs to the sulfur carrier protein TusA family.

It is found in the cytoplasm. Its function is as follows. Sulfur carrier protein which probably makes part of a sulfur-relay system. This is Sulfur carrier protein TusA from Vibrio campbellii (strain ATCC BAA-1116).